The primary structure comprises 499 residues: Lysine--tRNA ligase (499 aa).

Residues glutamate 408 and glutamate 415 each coordinate Mg(2+).

It belongs to the class-II aminoacyl-tRNA synthetase family. Homodimer. Mg(2+) serves as cofactor.

It localises to the cytoplasm. The enzyme catalyses tRNA(Lys) + L-lysine + ATP = L-lysyl-tRNA(Lys) + AMP + diphosphate. This is Lysine--tRNA ligase from Bacillus cereus (strain G9842).